Reading from the N-terminus, the 377-residue chain is Chaperone protein DnaJ (377 aa).

The J domain maps to 5–70 (DYYQILGIPK…EKRSAYDQYG (66 aa)). The CR-type zinc finger occupies 132 to 210 (GIKKEIQIPT…CHGQGRVETY (79 aa)). Zn(2+)-binding residues include Cys-145, Cys-148, Cys-162, Cys-165, Cys-184, Cys-187, Cys-198, and Cys-201. CXXCXGXG motif repeat units follow at residues 145–152 (CKTCYGSG), 162–169 (CSTCHGKG), 184–191 (CPTCHGKG), and 198–205 (CNLCHGQG).

It belongs to the DnaJ family. As to quaternary structure, homodimer. Zn(2+) serves as cofactor.

The protein resides in the cytoplasm. In terms of biological role, participates actively in the response to hyperosmotic and heat shock by preventing the aggregation of stress-denatured proteins and by disaggregating proteins, also in an autonomous, DnaK-independent fashion. Unfolded proteins bind initially to DnaJ; upon interaction with the DnaJ-bound protein, DnaK hydrolyzes its bound ATP, resulting in the formation of a stable complex. GrpE releases ADP from DnaK; ATP binding to DnaK triggers the release of the substrate protein, thus completing the reaction cycle. Several rounds of ATP-dependent interactions between DnaJ, DnaK and GrpE are required for fully efficient folding. Also involved, together with DnaK and GrpE, in the DNA replication of plasmids through activation of initiation proteins. This chain is Chaperone protein DnaJ, found in Buchnera aphidicola subsp. Acyrthosiphon pisum (strain 5A).